We begin with the raw amino-acid sequence, 157 residues long: MKHILALVVFIISFFCFKDVNCIKDFQLSPIESPLTALNKYDKFFLRMYNKMPRLEQSSTDYINGINMKNTIFVLYFYAKWCHACKLQGPELDKLEKNFGKKVHIIRIDIDNNEEIAKKNFIKALPTTIIIKNKVILAKNEHFVTSNELTSTIRKHL.

Positions 1-22 (MKHILALVVFIISFFCFKDVNC) are cleaved as a signal peptide. Residues 46 to 157 (LRMYNKMPRL…ELTSTIRKHL (112 aa)) enclose the Thioredoxin domain. Active-site nucleophile residues include C82 and C85. The cysteines at positions 82 and 85 are disulfide-linked.

It belongs to the thioredoxin family. As to quaternary structure, monomer. Component of the translocon PTEX complex composed of HSP101, EXP2, PTEX150, PTEX88 and TRX2. The disulfide bond between Cys-82 and Cys-85 acts as a redox-active center and is reduced by thioredoxin reductase TRXR.

Functionally, participates in various redox reactions through the reversible oxidation of its active center dithiol to a disulfide and catalyzes dithiol-disulfide exchange reactions. As part of the translocon PTEX complex, plays a role in the export of parasite proteins into the host erythrocyte. The translocon PTEX complex is a multi-protein machinery resident in the parasite parasitophorous vacuolar membrane, responsible for protein secretion into host cells. May contribute to the unfolding of proteins containing the PEXEL localization motif before their passage through the translocon or regulate the PTEX complex function. The chain is Thioredoxin 2 from Plasmodium berghei (strain Anka).